The sequence spans 386 residues: Phosphoglycerate kinase (386 aa).

Residues 21–23, R36, 59–62, R112, and R145 contribute to the substrate site; these read DLN and HLGR. ATP contacts are provided by residues K196, E313, and 339-342; that span reads GGDT.

It belongs to the phosphoglycerate kinase family. Monomer.

Its subcellular location is the cytoplasm. It catalyses the reaction (2R)-3-phosphoglycerate + ATP = (2R)-3-phospho-glyceroyl phosphate + ADP. Its pathway is carbohydrate degradation; glycolysis; pyruvate from D-glyceraldehyde 3-phosphate: step 2/5. The polypeptide is Phosphoglycerate kinase (Haemophilus influenzae (strain PittGG)).